The sequence spans 359 residues: Putative transposase y4uE (359 aa).

Disordered stretches follow at residues 1 to 31 (MGDG…APGG) and 318 to 359 (HYAH…EEAA).

The protein belongs to the transposase 9 family.

This chain is Putative transposase y4uE, found in Sinorhizobium fredii (strain NBRC 101917 / NGR234).